Consider the following 60-residue polypeptide: Colanic acid capsular biosynthesis activation protein B (60 aa).

This Klebsiella aerogenes (Enterobacter aerogenes) protein is Colanic acid capsular biosynthesis activation protein B (rcsB).